The primary structure comprises 362 residues: P2Y purinoceptor 1 (362 aa).

Topologically, residues 1 to 40 are extracellular; that stretch reads MTEALISAALNGTQPELLAGGWAAGNATTKCSLTKTGFQF. N-linked (GlcNAc...) asparagine glycosylation is found at Asn11 and Asn26. Intrachain disulfides connect Cys31-Cys285 and Cys113-Cys191. Lys35 serves as a coordination point for ADP. A helical transmembrane segment spans residues 41–63; it reads YYLPTVYILVFITGFLGNSVAIW. Residues 64-76 are Cytoplasmic-facing; that stretch reads MFVFHMRPWSGIS. The helical transmembrane segment at 77 to 98 threads the bilayer; sequence VYMFNLALADFLYVLTLPALIF. The Extracellular segment spans residues 99 to 114; sequence YYFNKTDWIFGDVMCK. The N-linked (GlcNAc...) asparagine glycan is linked to Asn102. The chain crosses the membrane as a helical span at residues 115–136; the sequence is LQRFIFHVNLYGSILFLTCISV. At 137 to 155 the chain is on the cytoplasmic side; the sequence is HRYTGVVHPLKSLGRLKKK. A helical transmembrane segment spans residues 156–177; that stretch reads NAVYVSSLVWALVVAVIAPILF. The Extracellular segment spans residues 178–203; sequence YSGTGVRRNKTITCYDTTADEYLRSY. Residue Asn186 is glycosylated (N-linked (GlcNAc...) asparagine). Position 192 to 194 (192 to 194) interacts with ADP; the sequence is YDT. The chain crosses the membrane as a helical span at residues 204–226; the sequence is FVYSMCTTVFMFCIPFIVILGCY. Over 227–249 the chain is Cytoplasmic; sequence GLIVKALIYKDLDNSPLRRKSIY. A helical membrane pass occupies residues 250 to 273; the sequence is LVIIVLTVFAVSYLPFHVMKTLNL. Residues 272 to 276, 292 to 295, and Arg299 contribute to the ADP site; these read NLRAR and YATY. At 274–292 the chain is on the extracellular side; it reads RARLDFQTPQMCAFNDKVY. The helical transmembrane segment at 293-314 threads the bilayer; that stretch reads ATYQVTRGLASLNSCVDPILYF. The Cytoplasmic portion of the chain corresponds to 315–362; that stretch reads LAGDTFRRRLSRATRKSSRRSEPNVQSKSEEMTLNILTEYKQNGDTSL.

The protein belongs to the G-protein coupled receptor 1 family. Brain, spinal cord, gastrointestinal tract, spleen and leg muscle. Is not detected in the heart, liver, stomach, lung and kidney.

It localises to the cell membrane. Functionally, receptor for extracellular adenine nucleotides such as ADP. In platelets, binding to ADP leads to mobilization of intracellular calcium ions via activation of phospholipase C, a change in platelet shape, and ultimately platelet aggregation. The sequence is that of P2Y purinoceptor 1 (P2RY1) from Gallus gallus (Chicken).